The primary structure comprises 418 residues: Gamma-glutamyl phosphate reductase (418 aa).

Belongs to the gamma-glutamyl phosphate reductase family.

Its subcellular location is the cytoplasm. It catalyses the reaction L-glutamate 5-semialdehyde + phosphate + NADP(+) = L-glutamyl 5-phosphate + NADPH + H(+). It functions in the pathway amino-acid biosynthesis; L-proline biosynthesis; L-glutamate 5-semialdehyde from L-glutamate: step 2/2. Functionally, catalyzes the NADPH-dependent reduction of L-glutamate 5-phosphate into L-glutamate 5-semialdehyde and phosphate. The product spontaneously undergoes cyclization to form 1-pyrroline-5-carboxylate. The sequence is that of Gamma-glutamyl phosphate reductase from Dechloromonas aromatica (strain RCB).